Consider the following 650-residue polypeptide: Chaperone protein DnaK (650 aa).

A Phosphothreonine; by autocatalysis modification is found at Thr200.

It belongs to the heat shock protein 70 family.

Its function is as follows. Acts as a chaperone. This chain is Chaperone protein DnaK, found in Paraburkholderia phytofirmans (strain DSM 17436 / LMG 22146 / PsJN) (Burkholderia phytofirmans).